We begin with the raw amino-acid sequence, 244 residues long: 5-oxoprolinase subunit A (244 aa).

The protein belongs to the LamB/PxpA family. Forms a complex composed of PxpA, PxpB and PxpC.

The enzyme catalyses 5-oxo-L-proline + ATP + 2 H2O = L-glutamate + ADP + phosphate + H(+). Its function is as follows. Catalyzes the cleavage of 5-oxoproline to form L-glutamate coupled to the hydrolysis of ATP to ADP and inorganic phosphate. The chain is 5-oxoprolinase subunit A from Shigella flexneri serotype 5b (strain 8401).